Consider the following 148-residue polypeptide: Large-conductance mechanosensitive channel (148 aa).

2 consecutive transmembrane segments (helical) span residues 12–32 (AFAM…GGAF) and 85–105 (GQFL…FLFI).

It belongs to the MscL family. In terms of assembly, homopentamer.

It is found in the cell inner membrane. Channel that opens in response to stretch forces in the membrane lipid bilayer. May participate in the regulation of osmotic pressure changes within the cell. This Bacteroides thetaiotaomicron (strain ATCC 29148 / DSM 2079 / JCM 5827 / CCUG 10774 / NCTC 10582 / VPI-5482 / E50) protein is Large-conductance mechanosensitive channel.